The following is a 312-amino-acid chain: Ribosomal RNA small subunit methyltransferase H (312 aa).

S-adenosyl-L-methionine contacts are provided by residues 36 to 38, Asp55, Phe81, Asp103, and Gln110; that span reads GGH.

This sequence belongs to the methyltransferase superfamily. RsmH family.

It localises to the cytoplasm. The enzyme catalyses cytidine(1402) in 16S rRNA + S-adenosyl-L-methionine = N(4)-methylcytidine(1402) in 16S rRNA + S-adenosyl-L-homocysteine + H(+). Functionally, specifically methylates the N4 position of cytidine in position 1402 (C1402) of 16S rRNA. The sequence is that of Ribosomal RNA small subunit methyltransferase H from Marinomonas sp. (strain MWYL1).